A 105-amino-acid polypeptide reads, in one-letter code: Antitoxin YfjZ (105 aa).

This sequence belongs to the CbeA/YafW/YfjZ antitoxin family.

In terms of biological role, antitoxin component of a type IV toxin-antitoxin (TA) system. Antitoxin that counteracts the effect of cognate toxin YpjF. Also counteracts the effect of non-cognate toxins CbtA and YfkI. In Escherichia coli (strain K12), this protein is Antitoxin YfjZ (yfjZ).